A 314-amino-acid chain; its full sequence is tRNA dimethylallyltransferase (314 aa).

Position 12-19 (12-19 (GPTGTGKS)) interacts with ATP. 14 to 19 (TGTGKS) is a substrate binding site.

It belongs to the IPP transferase family. Monomer. Requires Mg(2+) as cofactor.

The enzyme catalyses adenosine(37) in tRNA + dimethylallyl diphosphate = N(6)-dimethylallyladenosine(37) in tRNA + diphosphate. In terms of biological role, catalyzes the transfer of a dimethylallyl group onto the adenine at position 37 in tRNAs that read codons beginning with uridine, leading to the formation of N6-(dimethylallyl)adenosine (i(6)A). This chain is tRNA dimethylallyltransferase, found in Mycolicibacterium paratuberculosis (strain ATCC BAA-968 / K-10) (Mycobacterium paratuberculosis).